The primary structure comprises 459 residues: Probable 1,4-beta-D-glucan cellobiohydrolase C (459 aa).

An N-terminal signal peptide occupies residues 1–18; sequence MHYPLSLALAFLPFGIQA. Residues 19-54 form the CBM1 domain; the sequence is QQTLWGQCGGQGYSGATSCVAGATCATVNEYYAQCT. 2 disulfide bridges follow: cysteine 26/cysteine 43 and cysteine 37/cysteine 53. Residues 54 to 94 are thr-rich linker; sequence TPAAGTSSATTLKTTTSSTTAAVTTTTTTQSPTGSASPTTT. Residues 76–97 form a disordered region; that stretch reads VTTTTTTQSPTGSASPTTTASA. Residues 95–459 are catalytic; that stretch reads ASASGNPFSG…QLLTNANPAF (365 aa). The active site involves aspartate 189. Cysteines 190 and 249 form a disulfide. The Proton donor role is filled by aspartate 235. N-linked (GlcNAc...) asparagine glycosylation is present at asparagine 303. Cysteine 381 and cysteine 428 are joined by a disulfide. The active-site Nucleophile is the aspartate 414.

Belongs to the glycosyl hydrolase 6 (cellulase B) family.

The protein resides in the secreted. It catalyses the reaction Hydrolysis of (1-&gt;4)-beta-D-glucosidic linkages in cellulose and cellotetraose, releasing cellobiose from the non-reducing ends of the chains.. In terms of biological role, the biological conversion of cellulose to glucose generally requires three types of hydrolytic enzymes: (1) Endoglucanases which cut internal beta-1,4-glucosidic bonds; (2) Exocellobiohydrolases that cut the disaccharide cellobiose from the non-reducing end of the cellulose polymer chain; (3) Beta-1,4-glucosidases which hydrolyze the cellobiose and other short cello-oligosaccharides to glucose. This chain is Probable 1,4-beta-D-glucan cellobiohydrolase C (cbhC), found in Aspergillus niger (strain ATCC MYA-4892 / CBS 513.88 / FGSC A1513).